The chain runs to 124 residues: Apolipoprotein C-IV (124 aa).

An N-terminal signal peptide occupies residues 1–27 (MSLLRCRPRDLPSVSLSVLFLVSFVAS). N-linked (GlcNAc...) asparagine glycosylation occurs at Asn-107.

The protein belongs to the apolipoprotein C4 family. As to expression, expressed by the liver and secreted in plasma.

It localises to the secreted. In terms of biological role, may participate in lipoprotein metabolism. This Mus musculus (Mouse) protein is Apolipoprotein C-IV (Apoc4).